We begin with the raw amino-acid sequence, 186 residues long: ATP synthase subunit delta (186 aa).

It belongs to the ATPase delta chain family. As to quaternary structure, F-type ATPases have 2 components, F(1) - the catalytic core - and F(0) - the membrane proton channel. F(1) has five subunits: alpha(3), beta(3), gamma(1), delta(1), epsilon(1). F(0) has three main subunits: a(1), b(2) and c(10-14). The alpha and beta chains form an alternating ring which encloses part of the gamma chain. F(1) is attached to F(0) by a central stalk formed by the gamma and epsilon chains, while a peripheral stalk is formed by the delta and b chains.

Its subcellular location is the cell inner membrane. F(1)F(0) ATP synthase produces ATP from ADP in the presence of a proton or sodium gradient. F-type ATPases consist of two structural domains, F(1) containing the extramembraneous catalytic core and F(0) containing the membrane proton channel, linked together by a central stalk and a peripheral stalk. During catalysis, ATP synthesis in the catalytic domain of F(1) is coupled via a rotary mechanism of the central stalk subunits to proton translocation. Its function is as follows. This protein is part of the stalk that links CF(0) to CF(1). It either transmits conformational changes from CF(0) to CF(1) or is implicated in proton conduction. This Brucella canis (strain ATCC 23365 / NCTC 10854 / RM-666) protein is ATP synthase subunit delta.